We begin with the raw amino-acid sequence, 394 residues long: HORMA domain-containing protein 1 (394 aa).

In terms of domain architecture, HORMA spans Gln-24–Val-226. Positions Lys-306–Ile-394 are disordered. The segment covering Leu-311–Thr-325 has biased composition (polar residues). Basic and acidic residues predominate over residues Lys-353–Gln-362. At Ser-376 the chain carries Phosphoserine. Residues Lys-383–Lys-386 carry the Nuclear localization signal motif.

Interacts with HORMAD2. Interacts with IHO1. In terms of processing, phosphorylated at Ser-377 in a SPO11-dependent manner.

The protein resides in the nucleus. It is found in the chromosome. Plays a key role in meiotic progression. Regulates 3 different functions during meiosis: ensures that sufficient numbers of processed DNA double-strand breaks (DSBs) are available for successful homology search by increasing the steady-state numbers of single-stranded DSB ends. Promotes synaptonemal-complex formation independently of its role in homology search. Plays a key role in the male mid-pachytene checkpoint and the female meiotic prophase checkpoint: required for efficient build-up of ATR activity on unsynapsed chromosome regions, a process believed to form the basis of meiotic silencing of unsynapsed chromatin (MSUC) and meiotic prophase quality control in both sexes. This is HORMA domain-containing protein 1 (HORMAD1) from Sus scrofa (Pig).